A 90-amino-acid polypeptide reads, in one-letter code: Small ribosomal subunit protein bS16 (90 aa).

Belongs to the bacterial ribosomal protein bS16 family.

The protein is Small ribosomal subunit protein bS16 of Fervidobacterium nodosum (strain ATCC 35602 / DSM 5306 / Rt17-B1).